A 225-amino-acid polypeptide reads, in one-letter code: ATP-dependent Clp protease proteolytic subunit (225 aa).

Ser123 serves as the catalytic Nucleophile. Residue His148 is part of the active site.

This sequence belongs to the peptidase S14 family. As to quaternary structure, fourteen ClpP subunits assemble into 2 heptameric rings which stack back to back to give a disk-like structure with a central cavity, resembling the structure of eukaryotic proteasomes.

It localises to the cytoplasm. The catalysed reaction is Hydrolysis of proteins to small peptides in the presence of ATP and magnesium. alpha-casein is the usual test substrate. In the absence of ATP, only oligopeptides shorter than five residues are hydrolyzed (such as succinyl-Leu-Tyr-|-NHMec, and Leu-Tyr-Leu-|-Tyr-Trp, in which cleavage of the -Tyr-|-Leu- and -Tyr-|-Trp bonds also occurs).. Functionally, cleaves peptides in various proteins in a process that requires ATP hydrolysis. Has a chymotrypsin-like activity. Plays a major role in the degradation of misfolded proteins. The sequence is that of ATP-dependent Clp protease proteolytic subunit from Chlorobium chlorochromatii (strain CaD3).